Here is a 155-residue protein sequence, read N- to C-terminus: MSIIDNRKATHDYFIEDRYEAGMVLEGWEVKAIRDGRVHLKESYVIVRDGEIYLLGMHVSPLPTASTHIRPDATRTRKLLLKAEEIRKLIGKVEQRGYTLVPLNLHYKNGRIKLDFALGRGKKLYDKRDTAREKDWQREKERVLKHDTRVNQRDS.

This sequence belongs to the SmpB family.

The protein localises to the cytoplasm. In terms of biological role, required for rescue of stalled ribosomes mediated by trans-translation. Binds to transfer-messenger RNA (tmRNA), required for stable association of tmRNA with ribosomes. tmRNA and SmpB together mimic tRNA shape, replacing the anticodon stem-loop with SmpB. tmRNA is encoded by the ssrA gene; the 2 termini fold to resemble tRNA(Ala) and it encodes a 'tag peptide', a short internal open reading frame. During trans-translation Ala-aminoacylated tmRNA acts like a tRNA, entering the A-site of stalled ribosomes, displacing the stalled mRNA. The ribosome then switches to translate the ORF on the tmRNA; the nascent peptide is terminated with the 'tag peptide' encoded by the tmRNA and targeted for degradation. The ribosome is freed to recommence translation, which seems to be the essential function of trans-translation. This is SsrA-binding protein from Bordetella parapertussis (strain 12822 / ATCC BAA-587 / NCTC 13253).